Consider the following 1501-residue polypeptide: Neither inactivation nor afterpotential protein C (1501 aa).

The 267-residue stretch at 16–282 folds into the Protein kinase domain; that stretch reads FEIYEEIAQG…MVEMVEHPFL (267 aa). Residues 22–30 and lysine 45 each bind ATP; that span reads IAQGVNAKV. Aspartate 145 functions as the Proton acceptor in the catalytic mechanism. Serine 183 bears the Phosphoserine mark. The Myosin motor domain maps to 332–1037; it reads MYPEDLAALE…FLARLYELQV (706 aa). The tract at residues 913–934 is actin-binding; the sequence is LTLLKMLSQNANLGVHFVRCIR. IQ domains are found at residues 1036–1065 and 1072–1101; these read QVKKVIKVQSMMRALLARKRVKGGKVFKLG and HDVAASKIQKAFRGFRDRVRLPPLVNEKSG. Positions 1043–1271 are interaction with rtp; sequence VQSMMRALLA…RMGESDNIYN (229 aa). The tract at residues 1066-1501 is non alpha-helical, C-terminal domain; that stretch reads KKGPEHHDVA…ITLSGYAVDI (436 aa). 2 disordered regions span residues 1308-1364 and 1390-1473; these read NWGV…DPVR and KTNY…EDSN. The segment covering 1326-1335 has biased composition (pro residues); that stretch reads APPPPPPPMP. A compositionally biased stretch (low complexity) spans 1336-1358; the sequence is SSNYYRNNPNQQQRNYQQRSSYP. Residues 1405–1414 show a composition bias toward basic and acidic residues; that stretch reads NNRRGSDSGD. Residues 1449 to 1463 show a composition bias toward polar residues; sequence FGQQQRAPTLRQSPA.

In the C-terminal section; belongs to the TRAFAC class myosin-kinesin ATPase superfamily. Myosin family. It in the N-terminal section; belongs to the protein kinase superfamily. Ser/Thr protein kinase family. Interacts with rtp. As to expression, expressed in the phototransducing compartment of photoreceptor cells, the rhabdomeres (at protein level).

The protein localises to the cytoplasm. It localises to the cytoskeleton. It is found in the nucleus. The protein resides in the membrane. Its subcellular location is the cell projection. The protein localises to the rhabdomere membrane. It catalyses the reaction L-seryl-[protein] + ATP = O-phospho-L-seryl-[protein] + ADP + H(+). The catalysed reaction is L-threonyl-[protein] + ATP = O-phospho-L-threonyl-[protein] + ADP + H(+). Functionally, required for photoreceptor cell function. The ninaC proteins combines putative serine/threonine-protein kinase and myosin activities. Essential for the expression and stability of the rtp protein in the photoreceptors. The rtp/ninaC complex is required for stability of inad and inac and the normal termination of phototransduction in the retina. This Drosophila melanogaster (Fruit fly) protein is Neither inactivation nor afterpotential protein C (ninaC).